Consider the following 120-residue polypeptide: Large ribosomal subunit protein uL18 (120 aa).

The protein belongs to the universal ribosomal protein uL18 family. As to quaternary structure, part of the 50S ribosomal subunit; part of the 5S rRNA/L5/L18/L25 subcomplex. Contacts the 5S and 23S rRNAs.

Its function is as follows. This is one of the proteins that bind and probably mediate the attachment of the 5S RNA into the large ribosomal subunit, where it forms part of the central protuberance. This Rhodopseudomonas palustris (strain BisB18) protein is Large ribosomal subunit protein uL18.